The sequence spans 579 residues: MGLCCSCLRGESSLEDSTGLPIAENEREAVTSLLEFLENKDQYDFYSGKPLRALTTLVYSDNLNLQRSAALAFAEITEKYVSPVSRDVLEPILMLLTNPDPQIRIASCAALGNLAVNNENKLLIVEMGGLEPLIEQMKSDNVEVQCNAVGCITNLATQDDNKIEIAQSGALVPLTKLARSSNIRVQRNATGALLNMTHSGENRKELVDAGAVPVLVSLLSSMDADVQYYCTTALSNIAVDESNRRYLSKHAPKLVTKLVSLMNSTSPRVKCQATLALRNLASDTNYQLEIVRAGGLPDLVQLIQSDSLPLVLASVACIRNISIHPLNEGLIVDAGFLPPLVKLLDYQESEEIQCHAVSTLRNLAASSEKNRAEFFQSGVIEKFKQLALTCPISVQSEISACFAILALSDNTKYDLLQQDVLKVLIPMTMSQDQEISGNSAAAVANLISRVSNLEKILEYWGQPNDGIKGFLIRFLSSDFPTYEHIALWTILQLFECHNETIYKLIKEDQKLVNGVKKIADENYAVAREYMQDGQDTNIDHNGNSNNIEGNGRSNKQSSEKEDASFELYNITQQIIQFLV.

A lipid anchor (N-myristoyl glycine) is attached at G2. Residues C4, C5, and C7 are each lipidated (S-palmitoyl cysteine). ARM repeat units follow at residues 39-76 (NKDQ…FAEI), 77-116 (TEKY…NLAV), 118-157 (NENK…NLAT), 159-198 (DDNK…NMTH), 200-239 (GENR…NIAV), 241-282 (ESNR…NLAS), 284-323 (TNYQ…NISI), 325-365 (PLNE…NLAA), and 409-448 (DNTK…NLIS). Polar residues predominate over residues 534 to 556 (QDTNIDHNGNSNNIEGNGRSNKQ). Residues 534–560 (QDTNIDHNGNSNNIEGNGRSNKQSSEK) form a disordered region.

The protein belongs to the beta-catenin family.

Its subcellular location is the vacuole membrane. Functions in both vacuole inheritance and protein targeting from the cytoplasm to vacuole. The chain is Vacuolar protein 8 (VAC8) from Kluyveromyces lactis (strain ATCC 8585 / CBS 2359 / DSM 70799 / NBRC 1267 / NRRL Y-1140 / WM37) (Yeast).